Here is a 303-residue protein sequence, read N- to C-terminus: Glucosyl-3-phosphoglycerate synthase (303 aa).

Residues proline 35 to glutamate 39, serine 66, lysine 99, and aspartate 119 to serine 120 each bind UDP-alpha-D-glucose. Aspartate 121 is a binding site for Mn(2+). Glycine 166 to threonine 169 provides a ligand contact to (2R)-3-phosphoglycerate. UDP-alpha-D-glucose contacts are provided by residues tyrosine 211–glutamate 214 and arginine 238–arginine 243. Histidine 240 lines the Mn(2+) pocket. Asparagine 242 is a (2R)-3-phosphoglycerate binding site.

It belongs to the glycosyltransferase 2 family. As to quaternary structure, homotrimer. Mg(2+) serves as cofactor. It depends on Mn(2+) as a cofactor.

The enzyme catalyses an NDP-alpha-D-glucose + (2R)-3-phosphoglycerate = (2R)-2-O-(alpha-D-glucopyranosyl)-3-phospho-glycerate + a ribonucleoside 5'-diphosphate + H(+). It catalyses the reaction (2R)-3-phosphoglycerate + UDP-alpha-D-glucose = (2R)-2-O-(alpha-D-glucopyranosyl)-3-phospho-glycerate + UDP + H(+). It carries out the reaction ADP-alpha-D-glucose + (2R)-3-phosphoglycerate = (2R)-2-O-(alpha-D-glucopyranosyl)-3-phospho-glycerate + ADP + H(+). The catalysed reaction is GDP-D-glucose + (2R)-3-phosphoglycerate = (2R)-2-O-(alpha-D-glucopyranosyl)-3-phospho-glycerate + GDP + H(+). Functionally, involved in the biosynthesis of 6-O-methylglucose lipopolysaccarides (MGLPs). Catalyzes the transfer of the glucose moiety from a nuleotide sugar such as UDP-alpha-D-glucose to the position 2 of 3-phospho-D-glycerate (3-PGA) to form glucosyl-3-phosphoglycerate (GPG). It can use UDP-glucose, ADP-glucose and GDP-glucose as sugar donor substrates with decreasing affinity and with 3-PGA as an acceptor. D-glycerate can only be an acceptor with ADP-glucose and at a very low rate. The polypeptide is Glucosyl-3-phosphoglycerate synthase (gpgS) (Mycolicibacterium smegmatis (strain ATCC 700084 / mc(2)155) (Mycobacterium smegmatis)).